The sequence spans 63 residues: Prokaryotic ubiquitin-like protein Pup 1 (63 aa).

Composition is skewed to basic and acidic residues over residues 1–12 and 24–33; these read MSQEKVQRHGGG and GQERREKLGE. The interval 1 to 35 is disordered; sequence MSQEKVQRHGGGDGEEESGPEAAGQERREKLGEDV. The ARC ATPase binding stretch occupies residues 20 to 57; it reads PEAAGQERREKLGEDVDAILDEIDDVLEENAEDFVRAY. A coiled-coil region spans residues 25–51; the sequence is QERREKLGEDVDAILDEIDDVLEENAE. Deamidated glutamine is present on Gln63. Gln63 participates in a covalent cross-link: Isoglutamyl lysine isopeptide (Gln-Lys) (interchain with K-? in acceptor proteins).

It belongs to the prokaryotic ubiquitin-like protein family. Strongly interacts with the proteasome-associated ATPase ARC through a hydrophobic interface; the interacting region of Pup lies in its C-terminal half. There is one Pup binding site per ARC hexamer ring. Is modified by deamidation of its C-terminal glutamine to glutamate by the deamidase Dop, a prerequisite to the subsequent pupylation process.

The protein operates within protein degradation; proteasomal Pup-dependent pathway. Functionally, protein modifier that is covalently attached to lysine residues of substrate proteins, thereby targeting them for proteasomal degradation. The tagging system is termed pupylation. This chain is Prokaryotic ubiquitin-like protein Pup 1, found in Saccharopolyspora erythraea (strain ATCC 11635 / DSM 40517 / JCM 4748 / NBRC 13426 / NCIMB 8594 / NRRL 2338).